A 193-amino-acid chain; its full sequence is Ribosomal RNA small subunit methyltransferase G (193 aa).

S-adenosyl-L-methionine-binding positions include Gly-61, Leu-66, 112 to 113 (IE), and Arg-126.

The protein belongs to the methyltransferase superfamily. RNA methyltransferase RsmG family.

It is found in the cytoplasm. It catalyses the reaction guanosine(527) in 16S rRNA + S-adenosyl-L-methionine = N(7)-methylguanosine(527) in 16S rRNA + S-adenosyl-L-homocysteine. Its function is as follows. Specifically methylates the N7 position of guanine in position 527 of 16S rRNA. The chain is Ribosomal RNA small subunit methyltransferase G from Paracoccus denitrificans (strain Pd 1222).